We begin with the raw amino-acid sequence, 61 residues long: Large ribosomal subunit protein bL32 (61 aa).

A compositionally biased stretch (basic residues) spans 1 to 22 (MAVPKKKTSKSRRDMRRSHHAL). The tract at residues 1–27 (MAVPKKKTSKSRRDMRRSHHALKPSAY) is disordered.

Belongs to the bacterial ribosomal protein bL32 family.

The protein is Large ribosomal subunit protein bL32 of Rhodospirillum rubrum (strain ATCC 11170 / ATH 1.1.1 / DSM 467 / LMG 4362 / NCIMB 8255 / S1).